The primary structure comprises 192 residues: Adenylate kinase (192 aa).

10-18 (GVPGVGSTT) contacts ATP.

The protein belongs to the archaeal adenylate kinase family. In terms of assembly, monomer.

The protein resides in the cytoplasm. It catalyses the reaction AMP + ATP = 2 ADP. This is Adenylate kinase from Methanococcus vannielii (strain ATCC 35089 / DSM 1224 / JCM 13029 / OCM 148 / SB).